The primary structure comprises 221 residues: Cytidylate kinase 1 (221 aa).

7 to 15 (GPSASGKSS) is a binding site for ATP.

Belongs to the cytidylate kinase family. Type 1 subfamily.

It localises to the cytoplasm. It catalyses the reaction CMP + ATP = CDP + ADP. The catalysed reaction is dCMP + ATP = dCDP + ADP. The chain is Cytidylate kinase 1 from Borreliella burgdorferi (strain ATCC 35210 / DSM 4680 / CIP 102532 / B31) (Borrelia burgdorferi).